The sequence spans 201 residues: Large ribosomal subunit protein uL4 (201 aa).

Residues 45-75 (AQKSRSEVSGSGKKPWRQKGTGRARSGSLRS) are disordered.

It belongs to the universal ribosomal protein uL4 family. In terms of assembly, part of the 50S ribosomal subunit.

In terms of biological role, one of the primary rRNA binding proteins, this protein initially binds near the 5'-end of the 23S rRNA. It is important during the early stages of 50S assembly. It makes multiple contacts with different domains of the 23S rRNA in the assembled 50S subunit and ribosome. Forms part of the polypeptide exit tunnel. This chain is Large ribosomal subunit protein uL4, found in Buchnera aphidicola subsp. Cinara cedri (strain Cc).